Reading from the N-terminus, the 532-residue chain is NMDA receptor synaptonuclear signaling and neuronal migration factor (532 aa).

A lipid anchor (N-myristoyl glycine) is attached at Gly-2. Residues 2–235 (GAAASRRRAL…FSFQTATTTM (234 aa)) are necessary and sufficient to elicit dendritic processes and synaptic contacts. Disordered regions lie at residues 34–67 (SQSH…APHN) and 127–174 (RRQR…GCAK). Positions 38 to 48 (PENRNGADHLL) are enriched in basic and acidic residues. Positions 127–139 (RRQRERHPHHHSQ) are enriched in basic residues. A compositionally biased stretch (polar residues) spans 155-164 (PCQSWAGSRQ). A Phosphoserine modification is found at Ser-206. The Nuclear localization signal signature appears at 247–252 (RKRRKR). Residues 275 to 315 (RVKAQTFAERRERSFSRSWSDPTPMKADTSHDSRDSSDLQS) form a disordered region. 2 positions are modified to phosphoserine: Ser-292 and Ser-294. The span at 302-311 (DTSHDSRDSS) shows a compositional bias: basic and acidic residues.

The protein belongs to the NSMF family. As to quaternary structure, interacts with KPNA1; the interaction occurs in a calcium-independent manner after synaptic NMDA receptor stimulation and is required for nuclear import of NSMF but is competed by CABP1. Interacts (via the central NLS-containing motif region) with CABP1 (via EF-hands 1 and 2); the interaction occurs in a calcium-dependent manner after synaptic NMDA receptor stimulation and prevents the nuclear import of NSMF. Cannot be competed by calmodulin. Proteolytically processed after NMDA receptor activation. Cleaved in a calcium-dependent and calpain-sensitive manner. Calpain cleavage is essential for the translocation process from dendrites to the nucleus. As to expression, expressed in the radiatum and pyramidale strata of the hippocampus (at protein level). Strongly expressed in the brain. Expressed in the sensory and motor cortex, hippocampus, olfactory bulb, thalamus and amygdala. In the olfactory bulb expressed in the granular cell layer, mitral cell layer and the glomerular layer. In the hippocampus highly expressed in the regions associated with neuronal cell types as CA1, CA2, CA3 and granule cells of the dentate gyrus. All isoforms have been detected in the molecular layers of the hippocampus.

The protein localises to the nucleus. It is found in the nucleus envelope. The protein resides in the nucleus membrane. Its subcellular location is the nucleus matrix. It localises to the cytoplasm. The protein localises to the cell cortex. It is found in the cytoskeleton. The protein resides in the cell membrane. Its subcellular location is the cell projection. It localises to the dendrite. The protein localises to the synapse. It is found in the synaptosome. The protein resides in the postsynaptic density. Its subcellular location is the membrane. Its function is as follows. Couples NMDA-sensitive glutamate receptor signaling to the nucleus and triggers long-lasting changes in the cytoarchitecture of dendrites and spine synapse processes. Part of the cAMP response element-binding protein (CREB) shut-off signaling pathway. Stimulates outgrowth of olfactory axons and migration of gonadotropin-releasing hormone (GnRH) and luteinizing-hormone-releasing hormone (LHRH) neuronal cells. In Rattus norvegicus (Rat), this protein is NMDA receptor synaptonuclear signaling and neuronal migration factor (Nsmf).